The sequence spans 205 residues: MSTMNPDYDYLFKLLLIGDSGVGKSCLLLRFADDTYTESYISTIGVDFKIRTIELDGKTIKLQIWDTAGQERFRTITSSYYRGAHGIIVVYDVTDQESFNNVKQWLQEIDRYASENVNKLLVGNKSDLTTKKVVDFTTAKEYADQLGIPFLETSAKNATNVEQAFMTMAAEIKNRMGPITAASDSKPSVKINSSTPVSANKGGCC.

GTP contacts are provided by residues 18–26 (GDSGVGKSC), 36–43 (YTESYIST), 66–70 (DTAGQ), 124–127 (NKSD), and 154–156 (SAK). An Effector region motif is present at residues 40–48 (YISTIGVDF). The segment covering 183 to 198 (SDSKPSVKINSSTPVS) has biased composition (polar residues). Residues 183–205 (SDSKPSVKINSSTPVSANKGGCC) form a disordered region. 2 S-geranylgeranyl cysteine lipidation sites follow: Cys-204 and Cys-205.

Belongs to the small GTPase superfamily. Rab family.

The protein resides in the golgi apparatus. It is found in the endoplasmic reticulum. In terms of biological role, probably required for transit of protein from the ER through Golgi compartment. The polypeptide is Ras-related protein Rab-1A (RAB1A) (Lymnaea stagnalis (Great pond snail)).